The sequence spans 129 residues: Protein Turandot B1 (129 aa).

Positions 1–21 (MNSATSLMCFALLLISPLCMG) are cleaved as a signal peptide.

This sequence belongs to the Turandot family.

Its subcellular location is the secreted. Functionally, a humoral factor that may play a role in stress tolerance. In Drosophila erecta (Fruit fly), this protein is Protein Turandot B1 (TotB1).